Consider the following 736-residue polypeptide: MAVRALKLLTTLLAVVAAASQAEVESEAGWGMVTPDLLFAEGTAAYARGDWPGVVLSMERALRSRAALRALRLRCRTQCAADFPWELDPDWSPSPAQASGAAALRDLSFFGGLLRRAACLRRCLGPPAAHSLSEEMELEFRKRSPYNYLQVAYFKINKLEKAVAAAHTFFVGNPEHMEMQQNLDYYQTMSGVKEADFKDLETQPHMQEFRLGVRLYSEEQPQEAVPHLEAALQEYFVAYEECRALCEGPYDYDGYNYLEYNADLFQAITDHYIQVLNCKQNCVTELASHPSREKPFEDFLPSHYNYLQFAYYNIGNYTQAVECAKTYLLFFPNDEVMNQNLAYYAAMLGEEHTRSIGPRESAKEYRQRSLLEKELLFFAYDVFGIPFVDPDSWTPEEVIPKRLQEKQKSERETAVRISQEIGNLMKEIETLVEEKTKESLDVSRLTREGGPLLYEGISLTMNSKLLNGSQRVVMDGVISDHECQELQRLTNVAATSGDGYRGQTSPHTPNEKFYGVTVFKALKLGQEGKVPLQSAHLYYNVTEKVRRIMESYFRLDTPLYFSYSHLVCRTAIEEVQAERKDDSHPVHVDNCILNAETLVCVKEPPAYTFRDYSAILYLNGDFDGGNFYFTELDAKTVTAEVQPQCGRAVGFSSGTENPHGVKAVTRGQRCAIALWFTLDPRHSERDRVQADDLVKMLFSPEEMDLSQEQPLDAQQGPPEPAQESLSGSESKPKDEL.

The signal sequence occupies residues 1–22; it reads MAVRALKLLTTLLAVVAAASQA. TPR repeat units follow at residues 35–68, 143–176, 205–238, and 301–334; these read PDLLFAEGTAAYARGDWPGVVLSMERALRSRAAL, RSPYNYLQVAYFKINKLEKAVAAAHTFFVGNPEH, HMQEFRLGVRLYSEEQPQEAVPHLEAALQEYFVA, and PSHYNYLQFAYYNIGNYTQAVECAKTYLLFFPND. Asparagine 316 carries an N-linked (GlcNAc...) asparagine glycan. Residues 401–439 adopt a coiled-coil conformation; sequence KRLQEKQKSERETAVRISQEIGNLMKEIETLVEEKTKES. N-linked (GlcNAc...) asparagine glycans are attached at residues asparagine 467 and asparagine 540. The region spanning 564-678 is the Fe2OG dioxygenase domain; that stretch reads SHLVCRTAIE…RCAIALWFTL (115 aa). Fe cation contacts are provided by histidine 587, aspartate 589, and histidine 659. The active site involves arginine 669. The disordered stretch occupies residues 699-736; it reads SPEEMDLSQEQPLDAQQGPPEPAQESLSGSESKPKDEL. Residues 733–736 carry the Prevents secretion from ER motif; that stretch reads KDEL.

Belongs to the leprecan family. Fe cation is required as a cofactor. The cofactor is L-ascorbate. O-glycosylated; chondroitin sulfate.

It is found in the endoplasmic reticulum. The protein localises to the secreted. The protein resides in the extracellular space. It localises to the extracellular matrix. It catalyses the reaction L-prolyl-[collagen] + 2-oxoglutarate + O2 = trans-3-hydroxy-L-prolyl-[collagen] + succinate + CO2. Its function is as follows. Basement membrane-associated chondroitin sulfate proteoglycan (CSPG). Has prolyl 3-hydroxylase activity catalyzing the post-translational formation of 3-hydroxyproline in -Xaa-Pro-Gly- sequences in collagens, especially types IV and V. May be involved in the secretory pathway of cells. Has growth suppressive activity in fibroblasts. This is Prolyl 3-hydroxylase 1 from Homo sapiens (Human).